A 273-amino-acid chain; its full sequence is Putative pyruvate, phosphate dikinase regulatory protein (273 aa).

153–160 contacts ADP; that stretch reads GVSRTSKT.

This sequence belongs to the pyruvate, phosphate/water dikinase regulatory protein family. PDRP subfamily.

The enzyme catalyses N(tele)-phospho-L-histidyl/L-threonyl-[pyruvate, phosphate dikinase] + ADP = N(tele)-phospho-L-histidyl/O-phospho-L-threonyl-[pyruvate, phosphate dikinase] + AMP + H(+). The catalysed reaction is N(tele)-phospho-L-histidyl/O-phospho-L-threonyl-[pyruvate, phosphate dikinase] + phosphate + H(+) = N(tele)-phospho-L-histidyl/L-threonyl-[pyruvate, phosphate dikinase] + diphosphate. In terms of biological role, bifunctional serine/threonine kinase and phosphorylase involved in the regulation of the pyruvate, phosphate dikinase (PPDK) by catalyzing its phosphorylation/dephosphorylation. This chain is Putative pyruvate, phosphate dikinase regulatory protein, found in Sinorhizobium medicae (strain WSM419) (Ensifer medicae).